The chain runs to 875 residues: Alanine--tRNA ligase (875 aa).

The Zn(2+) site is built by His565, His569, Cys666, and His670.

The protein belongs to the class-II aminoacyl-tRNA synthetase family. Requires Zn(2+) as cofactor.

The protein resides in the cytoplasm. The enzyme catalyses tRNA(Ala) + L-alanine + ATP = L-alanyl-tRNA(Ala) + AMP + diphosphate. In terms of biological role, catalyzes the attachment of alanine to tRNA(Ala) in a two-step reaction: alanine is first activated by ATP to form Ala-AMP and then transferred to the acceptor end of tRNA(Ala). Also edits incorrectly charged Ser-tRNA(Ala) and Gly-tRNA(Ala) via its editing domain. In Leptothrix cholodnii (strain ATCC 51168 / LMG 8142 / SP-6) (Leptothrix discophora (strain SP-6)), this protein is Alanine--tRNA ligase.